Consider the following 780-residue polypeptide: Calpain clp-1 (780 aa).

The span at 269-282 shows a compositional bias: basic and acidic residues; sequence DVDPFVRPGPDPDR. The segment at 269–300 is disordered; sequence DVDPFVRPGPDPDRGGGGSGPSPISPRPTTEP. A Calpain catalytic domain is found at 316-611; sequence LFEDPQFLAN…FEKMEICNLG (296 aa). Active-site residues include Cys371, His527, and Asn551.

This sequence belongs to the peptidase C2 family. In terms of tissue distribution, expressed in muscle and neuronal tissues. Expressed in the ventral and dorsal nerve cord, intestinal and hypodermal tissues.

It localises to the cytoplasm. The protein resides in the myofibril. It is found in the sarcomere. Its subcellular location is the m line. Its function is as follows. Calcium-regulated non-lysosomal thiol-protease which catalyzes limited proteolysis of substrates. Required for assembly and maintenance of integrin attachment complexes which are essential for maintenance of adult muscle. Proteolytic activity is activated in response to increased intracellular Ca(2+) levels during cell degeneration and promotes necrotic cell death. This chain is Calpain clp-1, found in Caenorhabditis elegans.